A 155-amino-acid chain; its full sequence is uncharacterized protein (155 aa).

Residues 4–65 form the HTH asnC-type domain; it reads IDEIDEIIVR…VVDTSFFGEF (62 aa). The segment at residues 23–42 is a DNA-binding region (H-T-H motif); that stretch reads LTELGKKVGLTASAVKNRIE.

This is an uncharacterized protein from Pyrococcus abyssi (strain GE5 / Orsay).